A 520-amino-acid polypeptide reads, in one-letter code: Amine oxidase [flavin-containing] B (520 aa).

Position 2 is an N-acetylserine (S2). Over 2–489 (SSKCDVVVVG…TFLERHLPSV (488 aa)) the chain is Cytoplasmic. N6-acetyllysine is present on K52. Position 397 is an S-8alpha-FAD cysteine (C397). The helical; Anchor for type IV membrane protein transmembrane segment at 490-516 (PGLLRLIGLTAIFSATALGYLAHKRGL) threads the bilayer. Residues 517–520 (LVRV) are Mitochondrial intermembrane-facing.

Belongs to the flavin monoamine oxidase family. As to quaternary structure, monomer, homo- or heterodimer (containing two subunits of similar size). Each subunit contains a covalently bound flavin. Enzymatically active as monomer. It depends on FAD as a cofactor.

It localises to the mitochondrion outer membrane. The enzyme catalyses a secondary aliphatic amine + O2 + H2O = a primary amine + an aldehyde + H2O2. It carries out the reaction (R)-adrenaline + O2 + H2O = (R)-3,4-dihydroxymandelaldehyde + methylamine + H2O2. It catalyses the reaction a primary methyl amine + O2 + H2O = an aldehyde + H2O2 + NH4(+). The catalysed reaction is benzylamine + O2 + H2O = benzaldehyde + H2O2 + NH4(+). The enzyme catalyses dopamine + O2 + H2O = 3,4-dihydroxyphenylacetaldehyde + H2O2 + NH4(+). It carries out the reaction tyramine + O2 + H2O = (4-hydroxyphenyl)acetaldehyde + H2O2 + NH4(+). It catalyses the reaction (R)-noradrenaline + O2 + H2O = (R)-3,4-dihydroxymandelaldehyde + H2O2 + NH4(+). The catalysed reaction is 2-phenylethylamine + O2 + H2O = 2-phenylacetaldehyde + H2O2 + NH4(+). The enzyme catalyses N-acetylputrescine + O2 + H2O = 4-acetamidobutanal + H2O2 + NH4(+). Functionally, catalyzes the oxidative deamination of primary and some secondary amines such as neurotransmitters, and exogenous amines including the tertiary amine, neurotoxin 1-methyl-4-phenyl-1,2,3,6-tetrahydropyridine (MPTP), with concomitant reduction of oxygen to hydrogen peroxide and participates in the metabolism of neuroactive and vasoactive amines in the central nervous system and peripheral tissues. Preferentially degrades benzylamine and phenylethylamine. This chain is Amine oxidase [flavin-containing] B, found in Sus scrofa (Pig).